Here is a 359-residue protein sequence, read N- to C-terminus: Histidinol-phosphate aminotransferase (359 aa).

N6-(pyridoxal phosphate)lysine is present on Lys217.

This sequence belongs to the class-II pyridoxal-phosphate-dependent aminotransferase family. Histidinol-phosphate aminotransferase subfamily. In terms of assembly, homodimer. Pyridoxal 5'-phosphate serves as cofactor.

It carries out the reaction L-histidinol phosphate + 2-oxoglutarate = 3-(imidazol-4-yl)-2-oxopropyl phosphate + L-glutamate. It participates in amino-acid biosynthesis; L-histidine biosynthesis; L-histidine from 5-phospho-alpha-D-ribose 1-diphosphate: step 7/9. This is Histidinol-phosphate aminotransferase from Salmonella enteritidis PT4 (strain P125109).